The chain runs to 236 residues: T-cell surface glycoprotein CD8 alpha chain (236 aa).

An N-terminal signal peptide occupies residues M1–G26. An Ig-like V-type domain is found at Q27–S130. Topologically, residues Q27–Y189 are extracellular. The cysteines at positions 47 and 119 are disulfide-linked. N63 is a glycosylation site (N-linked (GlcNAc...) asparagine). O-linked (GalNAc...) threonine; partial glycosylation is present at T144. O-linked (GalNAc...) threonine glycosylation is found at T148, T152, T158, and T160. A disordered region spans residues A150–R170. The chain crosses the membrane as a helical span at residues I190 to I210. Residue C211 is the site of S-palmitoyl cysteine attachment. Over C211–V236 the chain is Cytoplasmic.

Forms disulfide-linked heterodimers with CD8B at the cell surface. Also forms homodimers in several cell types including NK-cells or peripheral blood T-lymphocytes. Interacts with the MHC class I HLA-A/B2M dimer. Interacts with LCK in a zinc-dependent manner. Post-translationally, palmitoylated, but association with CD8B seems to be more important for the enrichment of CD8A in lipid rafts. O-glycosylated. In terms of processing, phosphorylated in cytotoxic T-lymphocytes (CTLs) following activation.

It localises to the cell membrane. Functionally, integral membrane glycoprotein that plays an essential role in the immune response and serves multiple functions in responses against both external and internal offenses. In T-cells, functions primarily as a coreceptor for MHC class I molecule:peptide complex. The antigens presented by class I peptides are derived from cytosolic proteins while class II derived from extracellular proteins. Interacts simultaneously with the T-cell receptor (TCR) and the MHC class I proteins presented by antigen presenting cells (APCs). In turn, recruits the Src kinase LCK to the vicinity of the TCR-CD3 complex. LCK then initiates different intracellular signaling pathways by phosphorylating various substrates ultimately leading to lymphokine production, motility, adhesion and activation of cytotoxic T-lymphocytes (CTLs). This mechanism enables CTLs to recognize and eliminate infected cells and tumor cells. In NK-cells, the presence of CD8A homodimers at the cell surface provides a survival mechanism allowing conjugation and lysis of multiple target cells. CD8A homodimer molecules also promote the survival and differentiation of activated lymphocytes into memory CD8 T-cells. In Rattus norvegicus (Rat), this protein is T-cell surface glycoprotein CD8 alpha chain (Cd8a).